Reading from the N-terminus, the 116-residue chain is Ribonuclease P protein component (116 aa).

It belongs to the RnpA family. In terms of assembly, consists of a catalytic RNA component (M1 or rnpB) and a protein subunit.

It carries out the reaction Endonucleolytic cleavage of RNA, removing 5'-extranucleotides from tRNA precursor.. Functionally, RNaseP catalyzes the removal of the 5'-leader sequence from pre-tRNA to produce the mature 5'-terminus. It can also cleave other RNA substrates such as 4.5S RNA. The protein component plays an auxiliary but essential role in vivo by binding to the 5'-leader sequence and broadening the substrate specificity of the ribozyme. This chain is Ribonuclease P protein component, found in Leuconostoc mesenteroides subsp. mesenteroides (strain ATCC 8293 / DSM 20343 / BCRC 11652 / CCM 1803 / JCM 6124 / NCDO 523 / NBRC 100496 / NCIMB 8023 / NCTC 12954 / NRRL B-1118 / 37Y).